The sequence spans 254 residues: Sugar fermentation stimulation protein homolog (254 aa).

Belongs to the SfsA family.

In Parasynechococcus marenigrum (strain WH8102), this protein is Sugar fermentation stimulation protein homolog.